Here is a 131-residue protein sequence, read N- to C-terminus: Small ribosomal subunit protein uS9 (131 aa).

This sequence belongs to the universal ribosomal protein uS9 family.

The chain is Small ribosomal subunit protein uS9 from Actinobacillus pleuropneumoniae serotype 7 (strain AP76).